We begin with the raw amino-acid sequence, 205 residues long: Meiotic nuclear division protein 1 homolog (205 aa).

Ser2 bears the N-acetylserine mark. Residues His84 to Ile173 adopt a coiled-coil conformation.

The protein belongs to the MND1 family. Heterodimer with PSMC3IP/HOP2. MND1-PSMC3IP interacts with DMC1 and RAD51 and binds preferentially to dsDNA.

The protein resides in the nucleus. Its function is as follows. Required for proper homologous chromosome pairing and efficient cross-over and intragenic recombination during meiosis. Stimulates both DMC1- and RAD51-mediated homologous strand assimilation, which is required for the resolution of meiotic double-strand breaks. The polypeptide is Meiotic nuclear division protein 1 homolog (Homo sapiens (Human)).